The chain runs to 83 residues: Small ribosomal subunit protein bS18A (83 aa).

It belongs to the bacterial ribosomal protein bS18 family. Part of the 30S ribosomal subunit. Forms a tight heterodimer with protein bS6.

Functionally, binds as a heterodimer with protein bS6 to the central domain of the 16S rRNA, where it helps stabilize the platform of the 30S subunit. The sequence is that of Small ribosomal subunit protein bS18A from Nocardia farcinica (strain IFM 10152).